A 156-amino-acid polypeptide reads, in one-letter code: MGASRLYTLVLVLQPQRVLLGMKKRGFGAGRWNGFGGKVQEGETIEDGARRELQEESGLTVDALHKVGQIVFEFVGEPELMDVHVFCTDSIQGTPVESDEMRPCWFQLDQIPFKDMWPDDSYWFPLLLQKKKFHGYFKFQGQDTILDYTLREVDTV.

Residues 3-132 form the Nudix hydrolase domain; that stretch reads ASRLYTLVLV…WFPLLLQKKK (130 aa). Position 8 (T8) interacts with 2-oxo-dATP. Residues T8 and K23 each contribute to the 8-oxo-dGMP site. 8-oxo-dGTP-binding residues include T8 and K23. N(6)-methyl-AMP contacts are provided by T8 and K23. O(6)-methyl-dGMP contacts are provided by T8 and K23. F27 lines the 8-oxo-ATP pocket. 2-oxo-dATP contacts are provided by residues N33 and 35 to 38; that span reads FGGK. 8-oxo-dGMP is bound at residue N33. 8-oxo-dGTP-binding positions include N33 and 35 to 38; that span reads FGGK. Residue N33 coordinates O(6)-methyl-dGMP. Residues 35-38 and E52 contribute to the 8-oxo-ATP site; that span reads FGGK. Positions 36, 52, 55, 56, and 100 each coordinate Mg(2+). Positions 37 to 58 match the Nudix box motif; the sequence is GKVQEGETIEDGARRELQEESG. E56 is an 8-oxo-ATP binding site. 117 to 120 is a 2-oxo-dATP binding site; sequence WPDD. Residue 117 to 120 participates in 8-oxo-dGMP binding; sequence WPDD. 117 to 120 is an 8-oxo-dGTP binding site; sequence WPDD. 117–120 is a binding site for N(6)-methyl-AMP; it reads WPDD. An O(6)-methyl-dGMP-binding site is contributed by 117-120; that stretch reads WPDD. 117–120 contributes to the 8-oxo-ATP binding site; that stretch reads WPDD.

The protein belongs to the Nudix hydrolase family. In terms of assembly, monomer. The cofactor is Mg(2+). In terms of processing, the N-terminus is blocked. As to expression, widely expressed with highest expression in thymus, testis, embryo and proliferating blood lymphocytes.

Its subcellular location is the cytoplasm. It localises to the cytosol. The protein resides in the mitochondrion matrix. It is found in the nucleus. The catalysed reaction is 2-oxo-dATP + H2O = 2-oxo-dAMP + diphosphate + H(+). It catalyses the reaction 2-oxo-ATP + H2O = 2-oxo-AMP + diphosphate + H(+). The enzyme catalyses 8-oxo-dGTP + H2O = 8-oxo-dGMP + diphosphate + H(+). It carries out the reaction 8-oxo-dATP + H2O = 8-oxo-dAMP + diphosphate + H(+). The catalysed reaction is O(6)-methyl-dGTP + H2O = O(6)-methyl-dGMP + diphosphate + H(+). It catalyses the reaction N(6)-methyl-dATP + H2O = N(6)-methyl-dAMP + diphosphate + H(+). The enzyme catalyses N(6)-methyl-ATP + H2O = N(6)-methyl-AMP + diphosphate + H(+). Inhibited by 2-oxo-dADP and 8-oxo-dGDP. In terms of biological role, oxidized purine nucleoside triphosphate hydrolase which is a prominent sanitizer of the oxidized nucleotide pool. Catalyzes the hydrolysis of 2-oxo-dATP (2-hydroxy-dATP) into 2-oxo-dAMP. Also has a significant hydrolase activity toward 2-oxo-ATP, 8-oxo-dGTP and 8-oxo-dATP. Through the hydrolysis of oxidized purine nucleoside triphosphates, prevents their incorporation into DNA and the subsequent transversions A:T to C:G and G:C to T:A. Also catalyzes the hydrolysis of methylated purine nucleoside triphosphate preventing their integration into DNA. Through this antimutagenic activity protects cells from oxidative stress. This Homo sapiens (Human) protein is Oxidized purine nucleoside triphosphate hydrolase (NUDT1).